The sequence spans 592 residues: Neurogenic locus notch homolog protein (592 aa).

Residues 1-19 form the signal peptide; sequence MIFVLTLVALCTAIHCPDG. 6 EGF-like domains span residues 64–104, 106–146, 267–307, 353–387, 453–488, and 546–588; these read YPSI…DYQV, VPEA…EKCT, YPEA…NTCI, NSQT…PTCE, VPNS…ALCE, and IDGE…KHCN. 15 disulfide bridges follow: Cys68–Cys82, Cys76–Cys92, Cys110–Cys123, Cys117–Cys134, Cys136–Cys145, Cys271–Cys284, Cys278–Cys293, Cys295–Cys306, Cys362–Cys375, Cys377–Cys386, Cys457–Cys471, Cys478–Cys487, Cys550–Cys565, Cys555–Cys576, and Cys578–Cys587. N-linked (GlcNAc...) asparagine glycosylation is present at Asn552.

Belongs to the NOTCH family. As to quaternary structure, interacts with EB1.

The protein localises to the cell projection. The protein resides in the cilium. It localises to the flagellum. It is found in the cytoplasm. Its subcellular location is the cytoskeleton. The protein localises to the flagellum axoneme. The polypeptide is Neurogenic locus notch homolog protein (Giardia intestinalis (strain ATCC 50803 / WB clone C6) (Giardia lamblia)).